The chain runs to 241 residues: Small ribosomal subunit protein uS3 (241 aa).

One can recognise a KH type-2 domain in the interval Val39 to Ala109. The disordered stretch occupies residues Ala213–Glu241.

Belongs to the universal ribosomal protein uS3 family. As to quaternary structure, part of the 30S ribosomal subunit. Forms a tight complex with proteins S10 and S14.

Its function is as follows. Binds the lower part of the 30S subunit head. Binds mRNA in the 70S ribosome, positioning it for translation. The chain is Small ribosomal subunit protein uS3 from Acaryochloris marina (strain MBIC 11017).